Here is a 585-residue protein sequence, read N- to C-terminus: MANNKSAIELKNIVVDFGESVAIDNINLSVEKHQLVSLLGPSGCGKTTTLAVIAGLIKPTSGQVLFNGYDVTKKPPQERKLGLVFQNYALYPHMNVFENIVFPLYSDNSWKQAVLEKNSVANHEINCLLLTSNGASVQEIDQLNKLFHDSIEKPKQIQYQINDLNVSVFKNLNELTANLKLIPSKHQFAITNLNKQTLKQINELEAEFKTKWKLQKQTPIKSGVEHNAKLQAIKQHFSYEKQRLKKHYFKTKVELKQTLVENLKLVKKAISEQTKLIKQSSDYTKLKQLKRLIKVEPNQLKKQYKVFLNQLIKNYSLKTDKLTDTQLNEIEQIKTRIVSIKQFINKTALEVANKLAITKILTKRPDKISGGQQQRVAIARAIVRRPKLLLMDEPLSNLDAKLRVQTRQWIRQFQQELQITTVFVTHDQEEAMSISDVIVCMSTGKVQQIGTPSELYLKPANEFVARFLGTPEMNIIECSVKNNQLFWNNHLLVTESFKLNVEKLLVGFRYEQLVVTTNKSSLQAKLINIENLGKHLVATISLFDTTLSMRLELNSHLKVGDSLNFIIKANNLHFFDIDTKQRIEI.

An ABC transporter domain is found at 8–468 (IELKNIVVDF…PANEFVARFL (461 aa)). 40–47 (GPSGCGKT) serves as a coordination point for ATP.

Belongs to the ABC transporter superfamily.

The polypeptide is Putative ABC transporter ATP-binding protein MG187 (Mycoplasma genitalium (strain ATCC 33530 / DSM 19775 / NCTC 10195 / G37) (Mycoplasmoides genitalium)).